A 303-amino-acid chain; its full sequence is Ribosomal protein uL3 glutamine methyltransferase (303 aa).

This sequence belongs to the protein N5-glutamine methyltransferase family. PrmB subfamily.

It carries out the reaction L-glutaminyl-[ribosomal protein uL3] + S-adenosyl-L-methionine = N(5)-methyl-L-glutaminyl-[ribosomal protein uL3] + S-adenosyl-L-homocysteine + H(+). In terms of biological role, methylates large ribosomal subunit protein uL3 on a specific glutamine residue. The protein is Ribosomal protein uL3 glutamine methyltransferase of Neisseria meningitidis serogroup A / serotype 4A (strain DSM 15465 / Z2491).